The primary structure comprises 86 residues: Putative pro-MCH-like protein 1 (86 aa).

Residues 31–49 are NGE-like; the sequence is GSVAFPAENGVQDTESTQE. Positions 38–62 are disordered; it reads ENGVQDTESTQEKRETGDEENSAKF. Residues 52–64 form an NEI-like region; that stretch reads ETGDEENSAKFPV. The interval 68–86 is melanin-concentrating hormone-like; sequence DFDTLSCMLGRVYQSCWQV.

Belongs to the melanin-concentrating hormone family. As to expression, expressed in testis and brain.

The protein is Putative pro-MCH-like protein 1 (PMCHL1) of Homo sapiens (Human).